Reading from the N-terminus, the 25-residue chain is Snaclec bothroalternin subunit alpha/beta (25 aa).

In terms of domain architecture, C-type lectin spans 1-25 (DCPSDWSNHEGHCYRVFNEWMNWAD). A disulfide bridge connects residues cysteine 2 and cysteine 13.

The protein belongs to the snaclec family. Heterodimer of subunits alpha and beta; disulfide-linked. In terms of tissue distribution, expressed by the venom gland.

The protein resides in the secreted. In terms of biological role, thrombin (F2) inhibitor that inhibits aggregation of rabbit platelets induced by alpha-thrombin. The protein is Snaclec bothroalternin subunit alpha/beta of Bothrops alternatus (Urutu).